The primary structure comprises 560 residues: Membrane protein insertase YidC (560 aa).

6 helical membrane passes run N7–V27, A334–F354, Y357–F377, L431–I451, L476–L496, and F522–W542.

It belongs to the OXA1/ALB3/YidC family. Type 1 subfamily. In terms of assembly, interacts with the Sec translocase complex via SecD. Specifically interacts with transmembrane segments of nascent integral membrane proteins during membrane integration.

The protein localises to the cell inner membrane. Required for the insertion and/or proper folding and/or complex formation of integral membrane proteins into the membrane. Involved in integration of membrane proteins that insert both dependently and independently of the Sec translocase complex, as well as at least some lipoproteins. Aids folding of multispanning membrane proteins. This Rickettsia canadensis (strain McKiel) protein is Membrane protein insertase YidC.